The primary structure comprises 430 residues: Lipoyl synthase, mitochondrial (430 aa).

Residues 1-37 (MAASTGKLRTLFSAHSSLSARPSSALPALRLTILRSY) constitute a mitochondrion transit peptide. The segment covering 40–56 (TTPPDSSISDPSNSSTT) has biased composition (low complexity). Residues 40–63 (TTPPDSSISDPSNSSTTVKRPPTA) form a disordered region. Residues cysteine 141, cysteine 146, cysteine 152, cysteine 172, cysteine 176, cysteine 179, and serine 387 each contribute to the [4Fe-4S] cluster site. The region spanning 155–376 (GSSKSAATAT…KERALEMGFL (222 aa)) is the Radical SAM core domain.

Belongs to the radical SAM superfamily. Lipoyl synthase family. [4Fe-4S] cluster is required as a cofactor.

The protein localises to the mitochondrion. The catalysed reaction is [[Fe-S] cluster scaffold protein carrying a second [4Fe-4S](2+) cluster] + N(6)-octanoyl-L-lysyl-[protein] + 2 oxidized [2Fe-2S]-[ferredoxin] + 2 S-adenosyl-L-methionine + 4 H(+) = [[Fe-S] cluster scaffold protein] + N(6)-[(R)-dihydrolipoyl]-L-lysyl-[protein] + 4 Fe(3+) + 2 hydrogen sulfide + 2 5'-deoxyadenosine + 2 L-methionine + 2 reduced [2Fe-2S]-[ferredoxin]. It functions in the pathway protein modification; protein lipoylation via endogenous pathway; protein N(6)-(lipoyl)lysine from octanoyl-[acyl-carrier-protein]: step 2/2. Functionally, catalyzes the radical-mediated insertion of two sulfur atoms into the C-6 and C-8 positions of the octanoyl moiety bound to the lipoyl domains of lipoate-dependent enzymes, thereby converting the octanoylated domains into lipoylated derivatives. This chain is Lipoyl synthase, mitochondrial, found in Ajellomyces dermatitidis (strain ER-3 / ATCC MYA-2586) (Blastomyces dermatitidis).